Here is a 397-residue protein sequence, read N- to C-terminus: Elongation factor Tu 1 (397 aa).

In terms of domain architecture, tr-type G spans 10-206 (KPHVNIGTIG…AIDTWIPEPV (197 aa)). The segment at 19-26 (GHVDHGKT) is G1. Position 19–26 (19–26 (GHVDHGKT)) interacts with GTP. Residue Thr26 participates in Mg(2+) binding. Residues 61–65 (GITIS) are G2. A G3 region spans residues 82-85 (DCPG). GTP contacts are provided by residues 82-86 (DCPGH) and 137-140 (NKCD). Residues 137–140 (NKCD) are G4. A G5 region spans residues 175–177 (SAL).

The protein belongs to the TRAFAC class translation factor GTPase superfamily. Classic translation factor GTPase family. EF-Tu/EF-1A subfamily. Monomer.

Its subcellular location is the cytoplasm. It catalyses the reaction GTP + H2O = GDP + phosphate + H(+). Functionally, GTP hydrolase that promotes the GTP-dependent binding of aminoacyl-tRNA to the A-site of ribosomes during protein biosynthesis. This chain is Elongation factor Tu 1, found in Alkaliphilus metalliredigens (strain QYMF).